A 43-amino-acid polypeptide reads, in one-letter code: KPHRYRPGTVALRSTELLIRKLPFQREIAQDFKTDLRDIQLAR.

As to quaternary structure, the nucleosome is a histone octamer containing two molecules each of H2A, H2B, H3 and H4 assembled in one H3-H4 heterotetramer and two H2A-H2B heterodimers. The octamer wraps approximately 147 bp of DNA.

The protein resides in the nucleus. It localises to the chromosome. Core component of nucleosome. Nucleosomes wrap and compact DNA into chromatin, limiting DNA accessibility to the cellular machineries which require DNA as a template. Histones thereby play a central role in transcription regulation, DNA repair, DNA replication and chromosomal stability. DNA accessibility is regulated via a complex set of post-translational modifications of histones, also called histone code, and nucleosome remodeling. The chain is Histone H3 from Penaeus vannamei (Whiteleg shrimp).